Reading from the N-terminus, the 465-residue chain is Cysteine--tRNA ligase (465 aa).

Cys27 contacts Zn(2+). Residues Pro29–His39 carry the 'HIGH' region motif. Zn(2+) is bound by residues Cys207, His237, and Glu241. The short motif at Lys269 to Ser273 is the 'KMSKS' region element. An ATP-binding site is contributed by Lys272.

Belongs to the class-I aminoacyl-tRNA synthetase family. Monomer. The cofactor is Zn(2+).

The protein resides in the cytoplasm. It carries out the reaction tRNA(Cys) + L-cysteine + ATP = L-cysteinyl-tRNA(Cys) + AMP + diphosphate. The sequence is that of Cysteine--tRNA ligase from Helicobacter acinonychis (strain Sheeba).